The sequence spans 254 residues: Hydroxyacylglutathione hydrolase (254 aa).

Residues H52, H54, D56, H57, H109, D126, and H164 each coordinate Zn(2+).

The protein belongs to the metallo-beta-lactamase superfamily. Glyoxalase II family. As to quaternary structure, monomer. Zn(2+) is required as a cofactor.

The enzyme catalyses an S-(2-hydroxyacyl)glutathione + H2O = a 2-hydroxy carboxylate + glutathione + H(+). It functions in the pathway secondary metabolite metabolism; methylglyoxal degradation; (R)-lactate from methylglyoxal: step 2/2. Thiolesterase that catalyzes the hydrolysis of S-D-lactoyl-glutathione to form glutathione and D-lactic acid. This Stenotrophomonas maltophilia (strain R551-3) protein is Hydroxyacylglutathione hydrolase.